Here is a 969-residue protein sequence, read N- to C-terminus: Protein translocase subunit SecA (969 aa).

ATP contacts are provided by residues Q99, 117–121, and D631; that span reads GEGKT.

It belongs to the SecA family. Monomer and homodimer. Part of the essential Sec protein translocation apparatus which comprises SecA, SecYEG and auxiliary proteins SecDF. Other proteins may also be involved.

The protein resides in the cell inner membrane. Its subcellular location is the cytoplasm. It catalyses the reaction ATP + H2O + cellular proteinSide 1 = ADP + phosphate + cellular proteinSide 2.. Part of the Sec protein translocase complex. Interacts with the SecYEG preprotein conducting channel. Has a central role in coupling the hydrolysis of ATP to the transfer of proteins into and across the cell membrane, serving as an ATP-driven molecular motor driving the stepwise translocation of polypeptide chains across the membrane. The protein is Protein translocase subunit SecA of Chlamydia trachomatis serovar A (strain ATCC VR-571B / DSM 19440 / HAR-13).